Here is a 475-residue protein sequence, read N- to C-terminus: Lipoprotein lipase (475 aa).

A signal peptide spans Met-1–Ala-27. The interaction with GPIHBP1 stretch occupies residues Arg-32–Thr-53. Residues Cys-54 and Cys-67 are joined by a disulfide bond. Asn-70 carries N-linked (GlcNAc...) asparagine glycosylation. Tyr-121 carries the post-translational modification 3'-nitrotyrosine. Ser-159 functions as the Nucleophile in the catalytic mechanism. The Charge relay system role is filled by Asp-183. Residue Tyr-191 is modified to 3'-nitrotyrosine. Residues Ala-194, Arg-197, Ser-199, and Asp-202 each contribute to the Ca(2+) site. Cysteines 243 and 266 form a disulfide. The essential for determining substrate specificity stretch occupies residues Cys-243–Cys-266. His-268 acts as the Charge relay system in catalysis. 2 disulfide bridges follow: Cys-291–Cys-310 and Cys-302–Cys-305. Residues Phe-341–Lys-464 enclose the PLAT domain. Tyr-343 is modified (3'-nitrotyrosine). Residue Asn-386 is glycosylated (N-linked (GlcNAc...) asparagine). The segment at Trp-417–Trp-421 is important for interaction with lipoprotein particles. The segment at Lys-430–Lys-434 is important for heparin binding. An interaction with GPIHBP1 region spans residues Ile-443–Asp-467. A disulfide bridge links Cys-445 with Cys-465.

The protein belongs to the AB hydrolase superfamily. Lipase family. Homodimer. Interacts with GPIHBP1 with 1:1 stoichiometry. Interacts with APOC2; the interaction activates LPL activity in the presence of lipids. Interaction with heparan sulfate proteoglycans is required to protect LPL against loss of activity. Associates with lipoprotein particles in blood plasma. Interacts with LMF1 and SEL1L; interaction with SEL1L is required to prevent aggregation of newly synthesized LPL in the endoplasmic reticulum (ER), and for normal export of LPL from the ER to the extracellular space. Interacts with SORL1; SORL1 acts as a sorting receptor, promoting LPL localization to endosomes and later to lysosomes, leading to degradation of newly synthesized LPL. Tyrosine nitration after lipopolysaccharide (LPS) challenge down-regulates the lipase activity. As to expression, highest levels in the spinal cord.

It localises to the cell membrane. It is found in the secreted. The protein resides in the extracellular space. The protein localises to the extracellular matrix. The enzyme catalyses a triacylglycerol + H2O = a diacylglycerol + a fatty acid + H(+). It carries out the reaction a 1,2-diacyl-sn-glycero-3-phosphocholine + H2O = a 2-acyl-sn-glycero-3-phosphocholine + a fatty acid + H(+). The catalysed reaction is 1,2,3-tri-(9Z-octadecenoyl)-glycerol + H2O = di-(9Z)-octadecenoylglycerol + (9Z)-octadecenoate + H(+). It catalyses the reaction 1,2-di-(9Z-octadecenoyl)-sn-glycero-3-phosphocholine + H2O = (9Z-octadecenoyl)-sn-glycero-3-phosphocholine + (9Z)-octadecenoate + H(+). The enzyme catalyses 1,2,3-tributanoylglycerol + H2O = dibutanoylglycerol + butanoate + H(+). It carries out the reaction 1,2-dihexadecanoyl-sn-glycero-3-phosphocholine + H2O = hexadecanoyl-sn-glycero-3-phosphocholine + hexadecanoate + H(+). With respect to regulation, the apolipoprotein APOC2 acts as a coactivator of LPL activity. Ca(2+) binding promotes protein stability and formation of the active homodimer. Interaction with GPIHBP1 protects LPL against inactivation by ANGPTL4. Its function is as follows. Key enzyme in triglyceride metabolism. Catalyzes the hydrolysis of triglycerides from circulating chylomicrons and very low density lipoproteins (VLDL), and thereby plays an important role in lipid clearance from the blood stream, lipid utilization and storage. Although it has both phospholipase and triglyceride lipase activities it is primarily a triglyceride lipase with low but detectable phospholipase activity. Mediates margination of triglyceride-rich lipoprotein particles in capillaries. Recruited to its site of action on the luminal surface of vascular endothelium by binding to GPIHBP1 and cell surface heparan sulfate proteoglycans. The polypeptide is Lipoprotein lipase (LPL) (Papio anubis (Olive baboon)).